The sequence spans 201 residues: Large ribosomal subunit protein uL4 (201 aa).

The tract at residues 43–66 (TRAQKTRSEVSGGGKKPWRQKGTG) is disordered.

This sequence belongs to the universal ribosomal protein uL4 family. In terms of assembly, part of the 50S ribosomal subunit.

Its function is as follows. One of the primary rRNA binding proteins, this protein initially binds near the 5'-end of the 23S rRNA. It is important during the early stages of 50S assembly. It makes multiple contacts with different domains of the 23S rRNA in the assembled 50S subunit and ribosome. Functionally, forms part of the polypeptide exit tunnel. The chain is Large ribosomal subunit protein uL4 from Tolumonas auensis (strain DSM 9187 / NBRC 110442 / TA 4).